We begin with the raw amino-acid sequence, 472 residues long: Phosphoenolpyruvate carboxykinase (ATP), glycosomal (472 aa).

Position 221–228 (221–228 (GLSGTGKT)) interacts with ATP.

It belongs to the phosphoenolpyruvate carboxykinase (ATP) family. In terms of assembly, homodimer.

Its subcellular location is the glycosome. The enzyme catalyses oxaloacetate + ATP = phosphoenolpyruvate + ADP + CO2. It functions in the pathway carbohydrate biosynthesis; gluconeogenesis. The chain is Phosphoenolpyruvate carboxykinase (ATP), glycosomal (PEPCK) from Trypanosoma cruzi.